We begin with the raw amino-acid sequence, 508 residues long: Photosystem II CP47 reaction center protein (508 aa).

The next 6 membrane-spanning stretches (helical) occupy residues 21–36 (AVHI…WAGS), 101–115 (IILS…IWHW), 140–156 (GIHL…FGAF), 203–218 (IAAG…FHLS), 237–252 (VLSS…AFVV), and 457–472 (NFAL…HGGR).

Belongs to the PsbB/PsbC family. PsbB subfamily. As to quaternary structure, PSII is composed of 1 copy each of membrane proteins PsbA, PsbB, PsbC, PsbD, PsbE, PsbF, PsbH, PsbI, PsbJ, PsbK, PsbL, PsbM, PsbT, PsbX, PsbY, PsbZ, Psb30/Ycf12, at least 3 peripheral proteins of the oxygen-evolving complex and a large number of cofactors. It forms dimeric complexes. Binds multiple chlorophylls. PSII binds additional chlorophylls, carotenoids and specific lipids. serves as cofactor.

It is found in the plastid. It localises to the chloroplast thylakoid membrane. Functionally, one of the components of the core complex of photosystem II (PSII). It binds chlorophyll and helps catalyze the primary light-induced photochemical processes of PSII. PSII is a light-driven water:plastoquinone oxidoreductase, using light energy to abstract electrons from H(2)O, generating O(2) and a proton gradient subsequently used for ATP formation. This is Photosystem II CP47 reaction center protein from Chaetosphaeridium globosum (Charophycean green alga).